A 122-amino-acid chain; its full sequence is Large ribosomal subunit protein uL14 (122 aa).

Belongs to the universal ribosomal protein uL14 family. As to quaternary structure, part of the 50S ribosomal subunit. Forms a cluster with proteins L3 and L19. In the 70S ribosome, L14 and L19 interact and together make contacts with the 16S rRNA in bridges B5 and B8.

Functionally, binds to 23S rRNA. Forms part of two intersubunit bridges in the 70S ribosome. This chain is Large ribosomal subunit protein uL14, found in Borrelia turicatae (strain 91E135).